Reading from the N-terminus, the 201-residue chain is Orotidine 5'-phosphate decarboxylase (201 aa).

Substrate-binding positions include aspartate 8, lysine 26, 52–61 (DLKFCDIPST), threonine 106, arginine 153, glutamine 161, glycine 180, and arginine 181. Lysine 54 functions as the Proton donor in the catalytic mechanism.

This sequence belongs to the OMP decarboxylase family. Type 1 subfamily. Homodimer.

The catalysed reaction is orotidine 5'-phosphate + H(+) = UMP + CO2. It participates in pyrimidine metabolism; UMP biosynthesis via de novo pathway; UMP from orotate: step 2/2. Functionally, catalyzes the decarboxylation of orotidine 5'-monophosphate (OMP) to uridine 5'-monophosphate (UMP). The chain is Orotidine 5'-phosphate decarboxylase (pyrF) from Thermotoga maritima (strain ATCC 43589 / DSM 3109 / JCM 10099 / NBRC 100826 / MSB8).